A 399-amino-acid chain; its full sequence is CCA-adding enzyme (399 aa).

ATP-binding residues include G32 and R35. Residues G32 and R35 each coordinate CTP. Mg(2+)-binding residues include D45 and D47. ATP contacts are provided by R116, D159, R162, R165, and R168. Residues R116, D159, R162, R165, and R168 each contribute to the CTP site.

It belongs to the tRNA nucleotidyltransferase/poly(A) polymerase family. Bacterial CCA-adding enzyme type 3 subfamily. As to quaternary structure, homodimer. The cofactor is Mg(2+).

It catalyses the reaction a tRNA precursor + 2 CTP + ATP = a tRNA with a 3' CCA end + 3 diphosphate. The enzyme catalyses a tRNA with a 3' CCA end + 2 CTP + ATP = a tRNA with a 3' CCACCA end + 3 diphosphate. Catalyzes the addition and repair of the essential 3'-terminal CCA sequence in tRNAs without using a nucleic acid template. Adds these three nucleotides in the order of C, C, and A to the tRNA nucleotide-73, using CTP and ATP as substrates and producing inorganic pyrophosphate. tRNA 3'-terminal CCA addition is required both for tRNA processing and repair. Also involved in tRNA surveillance by mediating tandem CCA addition to generate a CCACCA at the 3' terminus of unstable tRNAs. While stable tRNAs receive only 3'-terminal CCA, unstable tRNAs are marked with CCACCA and rapidly degraded. The chain is CCA-adding enzyme from Streptococcus pneumoniae (strain CGSP14).